We begin with the raw amino-acid sequence, 188 residues long: MYAELGEEDLEVLRDVTLSLLDSEKGVDPEVAKRTVDVILKREAIDEEIAEELGVDPREVRKVLYKLHERGVVTFRKERREEYRYPVYSWRLNLREVLRRCLEERRRELEEVERALSNDMSHPMFHCGNDDCPRMSFEEAMEHEFRCPKCGEVLEEVDLTEERRELERLAEELKVEIRRLEELRERLG.

Positions 9–98 constitute an HTH TFE/IIEalpha-type domain; the sequence is DLEVLRDVTL…SWRLNLREVL (90 aa).

This sequence belongs to the TFE family. In terms of assembly, monomer. Interaction with RNA polymerase subunits RpoF and RpoE is necessary for Tfe stimulatory transcription activity. Able to interact with Tbp and RNA polymerase in the absence of DNA promoter. Interacts both with the preinitiation and elongation complexes.

Its function is as follows. Transcription factor that plays a role in the activation of archaeal genes transcribed by RNA polymerase. Facilitates transcription initiation by enhancing TATA-box recognition by TATA-box-binding protein (Tbp), and transcription factor B (Tfb) and RNA polymerase recruitment. Not absolutely required for transcription in vitro, but particularly important in cases where Tbp or Tfb function is not optimal. It dynamically alters the nucleic acid-binding properties of RNA polymerases by stabilizing the initiation complex and destabilizing elongation complexes. Seems to translocate with the RNA polymerase following initiation and acts by binding to the non template strand of the transcription bubble in elongation complexes. In Methanopyrus kandleri (strain AV19 / DSM 6324 / JCM 9639 / NBRC 100938), this protein is Transcription factor E.